Reading from the N-terminus, the 174-residue chain is Ribosome rescue factor SmrB (174 aa).

A Smr domain is found at Leu96–Glu171.

This sequence belongs to the SmrB family. In terms of assembly, associates with collided ribosomes, but not with correctly translating polysomes.

Acts as a ribosome collision sensor. Detects stalled/collided disomes (pairs of ribosomes where the leading ribosome is stalled and a second ribosome has collided with it) and endonucleolytically cleaves mRNA at the 5' boundary of the stalled ribosome. Stalled/collided disomes form a new interface (primarily via the 30S subunits) that binds SmrB. Cleaved mRNA becomes available for tmRNA ligation, leading to ribosomal subunit dissociation and rescue of stalled ribosomes. The protein is Ribosome rescue factor SmrB of Tolumonas auensis (strain DSM 9187 / NBRC 110442 / TA 4).